We begin with the raw amino-acid sequence, 655 residues long: tRNA-guanine(15) transglycosylase (655 aa).

D89 acts as the Nucleophile in catalysis. Substrate-binding residues include D124 and A195. Zn(2+) is bound by residues C281, C283, and C286. Residues 577–652 form the PUA domain; sequence KYRVVVNKEA…LAVKVRGGLK (76 aa).

The protein belongs to the archaeosine tRNA-ribosyltransferase family. It depends on Zn(2+) as a cofactor.

It catalyses the reaction guanosine(15) in tRNA + 7-cyano-7-deazaguanine = 7-cyano-7-carbaguanosine(15) in tRNA + guanine. It participates in tRNA modification; archaeosine-tRNA biosynthesis. Its function is as follows. Exchanges the guanine residue with 7-cyano-7-deazaguanine (preQ0) at position 15 in the dihydrouridine loop (D-loop) of archaeal tRNAs. Can also utilize guanine as substrate. In Methanocaldococcus jannaschii (strain ATCC 43067 / DSM 2661 / JAL-1 / JCM 10045 / NBRC 100440) (Methanococcus jannaschii), this protein is tRNA-guanine(15) transglycosylase.